The following is a 407-amino-acid chain: Phosphopentomutase (407 aa).

The Mn(2+) site is built by Asp-10, Asp-306, His-311, Asp-347, His-348, and His-359.

This sequence belongs to the phosphopentomutase family. Requires Mn(2+) as cofactor.

It is found in the cytoplasm. The catalysed reaction is 2-deoxy-alpha-D-ribose 1-phosphate = 2-deoxy-D-ribose 5-phosphate. The enzyme catalyses alpha-D-ribose 1-phosphate = D-ribose 5-phosphate. The protein operates within carbohydrate degradation; 2-deoxy-D-ribose 1-phosphate degradation; D-glyceraldehyde 3-phosphate and acetaldehyde from 2-deoxy-alpha-D-ribose 1-phosphate: step 1/2. Its function is as follows. Isomerase that catalyzes the conversion of deoxy-ribose 1-phosphate (dRib-1-P) and ribose 1-phosphate (Rib-1-P) to deoxy-ribose 5-phosphate (dRib-5-P) and ribose 5-phosphate (Rib-5-P), respectively. This is Phosphopentomutase from Salmonella gallinarum (strain 287/91 / NCTC 13346).